The sequence spans 102 residues: Small ribosomal subunit protein uS10 (102 aa).

This sequence belongs to the universal ribosomal protein uS10 family. As to quaternary structure, part of the 30S ribosomal subunit.

In terms of biological role, involved in the binding of tRNA to the ribosomes. The protein is Small ribosomal subunit protein uS10 of Saccharolobus islandicus (strain M.16.4 / Kamchatka #3) (Sulfolobus islandicus).